Consider the following 347-residue polypeptide: Phenylalanine--tRNA ligase alpha subunit (347 aa).

A disordered region spans residues 83–111 (QNLSGGDDSGADPTFDPTLPGTRPSLGHI). Glu274 provides a ligand contact to Mg(2+).

This sequence belongs to the class-II aminoacyl-tRNA synthetase family. Phe-tRNA synthetase alpha subunit type 1 subfamily. Tetramer of two alpha and two beta subunits. Mg(2+) serves as cofactor.

The protein localises to the cytoplasm. It carries out the reaction tRNA(Phe) + L-phenylalanine + ATP = L-phenylalanyl-tRNA(Phe) + AMP + diphosphate + H(+). In Rhodopirellula baltica (strain DSM 10527 / NCIMB 13988 / SH1), this protein is Phenylalanine--tRNA ligase alpha subunit.